A 461-amino-acid chain; its full sequence is Ornithine decarboxylase (461 aa).

Lys69 carries the post-translational modification N6-(pyridoxal phosphate)lysine. Pyridoxal 5'-phosphate-binding positions include Ser200, Gly237, and Glu274–Arg277. Ser303 carries the post-translational modification Phosphoserine; by CK2. Tyr331–Asp332 serves as a coordination point for substrate. The active-site Proton donor; shared with dimeric partner is Cys360. Cys360 carries the post-translational modification S-nitrosocysteine. Asp361 serves as a coordination point for substrate. Tyr389 contacts pyridoxal 5'-phosphate.

The protein belongs to the Orn/Lys/Arg decarboxylase class-II family. Homodimer. Only the dimer is catalytically active, as the active sites are constructed of residues from both monomers. Pyridoxal 5'-phosphate serves as cofactor.

It carries out the reaction L-ornithine + H(+) = putrescine + CO2. It participates in amine and polyamine biosynthesis; putrescine biosynthesis via L-ornithine pathway; putrescine from L-ornithine: step 1/1. Its activity is regulated as follows. Inhibited by antizymes (AZs) OAZ1, OAZ2 and OAZ3 in response to polyamine levels. AZs inhibit the assembly of the functional homodimer by binding to ODC monomers. Additionally, OAZ1 targets ODC monomers for ubiquitin-independent proteolytic destruction by the 26S proteasome. Its function is as follows. Catalyzes the first and rate-limiting step of polyamine biosynthesis that converts ornithine into putrescine, which is the precursor for the polyamines, spermidine and spermine. Polyamines are essential for cell proliferation and are implicated in cellular processes, ranging from DNA replication to apoptosis. The sequence is that of Ornithine decarboxylase (ODC1) from Bos taurus (Bovine).